Reading from the N-terminus, the 305-residue chain is MNYQTILEEIEKEIQALFVEGKVASYIPALANVNPNQFSMAIKMFDGQTFGVGEIDKKFSIQSISKVFTFTLALNYYGKELYKRVSHEPSGNPFNSLVQLEYENGIPRNPFINAGAIVTADTLVSIYKNDTFNQILDFIKMVSNDKTIDFNEEIFHSELEHGFRNYALINMIKSFGNIHNDIDEVIKTYFKQCSIMMSPSQLASSMLFLANHGINPITNERILTESKAKRISSLMLTCGHYDASGDFAYKVGLPGKSGVGGGIVAIVPKKMAICVYSPKLNTQGNSLIGTKALELFTTKTGLSIF.

The substrate site is built by Ser-63, Asn-113, Glu-158, Asn-165, Tyr-189, Tyr-241, and Val-259.

It belongs to the glutaminase family. Homotetramer.

It catalyses the reaction L-glutamine + H2O = L-glutamate + NH4(+). The polypeptide is Glutaminase (Aliarcobacter butzleri (strain RM4018) (Arcobacter butzleri)).